The primary structure comprises 221 residues: Triosephosphate isomerase (221 aa).

8 to 10 (NLK) contacts substrate. Histidine 92 functions as the Electrophile in the catalytic mechanism. Glutamate 140 (proton acceptor) is an active-site residue. Substrate is bound by residues isoleucine 145, glycine 180, and 201–202 (AS).

This sequence belongs to the triosephosphate isomerase family. As to quaternary structure, homotetramer; dimer of dimers.

Its subcellular location is the cytoplasm. The enzyme catalyses D-glyceraldehyde 3-phosphate = dihydroxyacetone phosphate. It participates in carbohydrate biosynthesis; gluconeogenesis. The protein operates within carbohydrate degradation; glycolysis; D-glyceraldehyde 3-phosphate from glycerone phosphate: step 1/1. In terms of biological role, involved in the gluconeogenesis. Catalyzes stereospecifically the conversion of dihydroxyacetone phosphate (DHAP) to D-glyceraldehyde-3-phosphate (G3P). This Methanococcoides burtonii (strain DSM 6242 / NBRC 107633 / OCM 468 / ACE-M) protein is Triosephosphate isomerase.